The primary structure comprises 608 residues: Formate hydrogenlyase subunit 3 (608 aa).

The next 12 helical transmembrane spans lie at 10-26 (GVAW…LFSF), 44-67 (LYTA…LSLV), 76-93 (LNAI…FVSL), 116-140 (AAAV…MALC), 153-173 (LWFA…WLLW), 197-218 (IWLL…HGWV), 229-251 (AAAL…LSLL), 258-280 (WWGI…YALV), 296-312 (IGII…GIAL), 416-440 (LAVG…VTFL), 453-476 (CAPL…GVAA), and 502-521 (MITL…MAIC).

It belongs to the complex I subunit 4 family. FHL comprises of a formate dehydrogenase, unidentified electron carriers and a hydrogenase (isoenzyme 3). In this non-energy conserving pathway molecular hydrogen and carbodioxide from formate are released.

It localises to the cell inner membrane. The protein is Formate hydrogenlyase subunit 3 (hycC) of Escherichia coli (strain K12).